A 583-amino-acid chain; its full sequence is COP9 signalosome complex subunit 10 (583 aa).

Residues methionine 1–leucine 35 are compositionally biased toward acidic residues. Residues methionine 1 to aspartate 55 form a disordered region. One can recognise a PCI domain in the interval aspartate 297 to phenylalanine 485.

In terms of assembly, component of a COP9 signalosome-like (CSN) complex.

Its subcellular location is the cytoplasm. It localises to the nucleus. Component of the COP9 signalosome (CSN) complex that acts as an regulator of the ubiquitin (Ubl) conjugation pathway by mediating the deneddylation of the cullin subunit of SCF-type E3 ubiquitin-protein ligase complexes. The CSN complex is involved in the regulation of the mating pheromone response. This Kluyveromyces lactis (strain ATCC 8585 / CBS 2359 / DSM 70799 / NBRC 1267 / NRRL Y-1140 / WM37) (Yeast) protein is COP9 signalosome complex subunit 10 (RRI2).